A 232-amino-acid chain; its full sequence is tRNA (guanine-N(1)-)-methyltransferase (232 aa).

S-adenosyl-L-methionine-binding positions include Gly-114 and 134–139 (IGDYIL).

Belongs to the RNA methyltransferase TrmD family. As to quaternary structure, homodimer.

Its subcellular location is the cytoplasm. The catalysed reaction is guanosine(37) in tRNA + S-adenosyl-L-methionine = N(1)-methylguanosine(37) in tRNA + S-adenosyl-L-homocysteine + H(+). Functionally, specifically methylates guanosine-37 in various tRNAs. This is tRNA (guanine-N(1)-)-methyltransferase from Wolbachia pipientis subsp. Culex pipiens (strain wPip).